Here is a 1066-residue protein sequence, read N- to C-terminus: Coiled-coil domain-containing protein 73 (1066 aa).

Coiled coils occupy residues 47 to 134 (KAET…QVSQ) and 178 to 391 (LVRE…KTEE). 5 disordered regions span residues 568–600 (LDTRSNKASSNGMSNEMAHKRNYNTDGSESNPF), 719–811 (SENS…PKSG), 854–883 (LSPATPSADSVSTSARSAFDLPSPDKPEKT), 944–978 (KNIESDPTSNSRAADTMSNWSIHLDPKGQPREERN), and 1003–1027 (VQQSHSQTVKVTDSPDPLTFSPGNN). Polar residues-rich tracts occupy residues 591–600 (NTDGSESNPF), 742–781 (RTNTNDIQNSSLRNHLGASESSVSVSDFQVNQGDSHTSQA), 789–811 (PLTTSSEKQPPSESQITETPKSG), 857–869 (ATPSADSVSTSAR), and 948–964 (SDPTSNSRAADTMSNWS). The span at 967–978 (LDPKGQPREERN) shows a compositional bias: basic and acidic residues. The span at 1003–1013 (VQQSHSQTVKV) shows a compositional bias: polar residues.

This chain is Coiled-coil domain-containing protein 73 (Ccdc73), found in Mus musculus (Mouse).